A 140-amino-acid polypeptide reads, in one-letter code: Large ribosomal subunit protein uL16 (140 aa).

The protein belongs to the universal ribosomal protein uL16 family. In terms of assembly, part of the 50S ribosomal subunit.

In terms of biological role, binds 23S rRNA and is also seen to make contacts with the A and possibly P site tRNAs. The protein is Large ribosomal subunit protein uL16 of Malacoplasma penetrans (strain HF-2) (Mycoplasma penetrans).